A 260-amino-acid chain; its full sequence is Carbonic anhydrase 2 (260 aa).

Ser2 bears the N-acetylserine mark. Ser2 carries the post-translational modification Phosphoserine. In terms of domain architecture, Alpha-carbonic anhydrase spans 3 to 259 (HHWGYGKHNG…LKNRQIKASF (257 aa)). His64 functions as the Proton donor/acceptor in the catalytic mechanism. The Zn(2+) site is built by His94, His96, and His119. Phosphoserine is present on residues Ser165 and Ser172. 198-199 (TT) is a binding site for substrate.

The protein belongs to the alpha-carbonic anhydrase family. In terms of assembly, interacts with SLC4A4. Interaction with SLC4A7 regulates SLC4A7 transporter activity. Interacts with SLC26A6 isoform 4 (via C-terminus cytoplasmic domain). Zn(2+) is required as a cofactor. Requires Co(2+) as cofactor.

The protein localises to the cytoplasm. It localises to the cell membrane. The enzyme catalyses hydrogencarbonate + H(+) = CO2 + H2O. The catalysed reaction is urea = cyanamide + H2O. Activated by X-ray, histamine, L-adrenaline, L- and D-phenylalanine, L- and D-histidine, L-His-OMe and beta-Ala-His (carnosine). Competitively inhibited by saccharin, thioxolone, coumarins, 667-coumate, celecoxib (Celebrex), valdecoxib (Bextra), SC-125, SC-560, diclofenac, acetate, azide, bromide, sulfonamide derivatives such as acetazolamide (AZA), methazolamide (MZA), ethoxzolamide (EZA), dichlorophenamide (DCP), brinzolamide, dansylamide, thiabendazole-5-sulfonamide, trifluoromethane sulfonamide and N-hydroxysulfamide, fructose-based sugar sulfamate RWJ-37497, and Foscarnet (phosphonoformate trisodium salt). Repressed strongly by hydrogen sulfide(HS) and weakly by nitrate (NO(3)). Esterase activity weakly reduced by cyanamide. N-hydroxyurea interferes with zinc binding and inhibit activity. Catalyzes the reversible hydration of carbon dioxide. Can also hydrate cyanamide to urea. Stimulates the chloride-bicarbonate exchange activity of SLC26A6. Essential for bone resorption and osteoclast differentiation. Involved in the regulation of fluid secretion into the anterior chamber of the eye. Contributes to intracellular pH regulation in the duodenal upper villous epithelium during proton-coupled peptide absorption. This chain is Carbonic anhydrase 2 (CA2), found in Homo sapiens (Human).